Here is a 258-residue protein sequence, read N- to C-terminus: UPF0246 protein ETA_07010 (258 aa).

It belongs to the UPF0246 family.

This chain is UPF0246 protein ETA_07010, found in Erwinia tasmaniensis (strain DSM 17950 / CFBP 7177 / CIP 109463 / NCPPB 4357 / Et1/99).